The primary structure comprises 125 residues: Histone H2A (125 aa).

The span at 1 to 18 shows a compositional bias: basic residues; sequence MSGRGKGGKVKAKAKSRS. A disordered region spans residues 1–21; the sequence is MSGRGKGGKVKAKAKSRSSRA. Ser2 is modified (N-acetylserine). Residue Ser2 is modified to Phosphoserine. Residue Lys119 forms a Glycyl lysine isopeptide (Lys-Gly) (interchain with G-Cter in ubiquitin) linkage.

Belongs to the histone H2A family. In terms of assembly, the nucleosome is a histone octamer containing two molecules each of H2A, H2B, H3 and H4 assembled in one H3-H4 heterotetramer and two H2A-H2B heterodimers. The octamer wraps approximately 147 bp of DNA. In terms of processing, monoubiquitination of Lys-119 gives a specific tag for epigenetic transcriptional repression. Post-translationally, phosphorylation on Ser-2 is enhanced during mitosis. Phosphorylation on Ser-2 directly represses transcription.

It is found in the nucleus. Its subcellular location is the chromosome. In terms of biological role, core component of nucleosome. Nucleosomes wrap and compact DNA into chromatin, limiting DNA accessibility to the cellular machineries which require DNA as a template. Histones thereby play a central role in transcription regulation, DNA repair, DNA replication and chromosomal stability. DNA accessibility is regulated via a complex set of post-translational modifications of histones, also called histone code, and nucleosome remodeling. The polypeptide is Histone H2A (Chironomus thummi thummi (Midge)).